Reading from the N-terminus, the 344-residue chain is Golgi-associated RAB2 interactor protein 1B (344 aa).

Residues 271–293 (FRSSRKVETNKNSSGKDSSREDS) form a disordered region.

The protein belongs to the GARIN family.

The protein localises to the golgi apparatus. Its function is as follows. RAB2B effector protein required for accurate acrosome formation and normal male fertility. In complex with RAB2A/RAB2B, seems to suppress excessive vesicle trafficking during acrosome formation. The chain is Golgi-associated RAB2 interactor protein 1B from Homo sapiens (Human).